The sequence spans 520 residues: L-cysteine:1D-myo-inositol 2-amino-2-deoxy-alpha-D-glucopyranoside ligase (520 aa).

Cysteine 48 provides a ligand contact to Zn(2+). Residues 48-51 (CGIT), threonine 63, and 86-88 (NVT) contribute to the L-cysteinyl-5'-AMP site. The short motif at 50–60 (ITPYDSTHLGH) is the 'HIGH' region element. A 'ERGGDP' region motif is present at residues 192–197 (ERGGDP). Residue tryptophan 232 coordinates L-cysteinyl-5'-AMP. A Zn(2+)-binding site is contributed by cysteine 236. 254–256 (GED) is an L-cysteinyl-5'-AMP binding site. Histidine 261 lines the Zn(2+) pocket. Position 288 (isoleucine 288) interacts with L-cysteinyl-5'-AMP. Positions 294–298 (KMSKS) match the 'KMSKS' region motif.

This sequence belongs to the class-I aminoacyl-tRNA synthetase family. MshC subfamily. As to quaternary structure, monomer. Requires Zn(2+) as cofactor.

The catalysed reaction is 1D-myo-inositol 2-amino-2-deoxy-alpha-D-glucopyranoside + L-cysteine + ATP = 1D-myo-inositol 2-(L-cysteinylamino)-2-deoxy-alpha-D-glucopyranoside + AMP + diphosphate + H(+). Its function is as follows. Catalyzes the ATP-dependent condensation of GlcN-Ins and L-cysteine to form L-Cys-GlcN-Ins. This is L-cysteine:1D-myo-inositol 2-amino-2-deoxy-alpha-D-glucopyranoside ligase from Corynebacterium kroppenstedtii (strain DSM 44385 / JCM 11950 / CIP 105744 / CCUG 35717).